The primary structure comprises 185 residues: Elongation factor P (185 aa).

It belongs to the elongation factor P family.

The protein resides in the cytoplasm. The protein operates within protein biosynthesis; polypeptide chain elongation. Functionally, involved in peptide bond synthesis. Stimulates efficient translation and peptide-bond synthesis on native or reconstituted 70S ribosomes in vitro. Probably functions indirectly by altering the affinity of the ribosome for aminoacyl-tRNA, thus increasing their reactivity as acceptors for peptidyl transferase. The protein is Elongation factor P of Bordetella petrii (strain ATCC BAA-461 / DSM 12804 / CCUG 43448).